Reading from the N-terminus, the 114-residue chain is Small ribosomal subunit protein bS6 (114 aa).

The protein belongs to the bacterial ribosomal protein bS6 family.

In terms of biological role, binds together with bS18 to 16S ribosomal RNA. This Bacteroides fragilis (strain YCH46) protein is Small ribosomal subunit protein bS6.